The following is a 188-amino-acid chain: Large ribosomal subunit protein eL18B (188 aa).

Residues 153–188 (GKAPGTPHSRTKPYVLSKGRKFERARGRRASRGYKN) are disordered. A compositionally biased stretch (basic residues) spans 178 to 188 (RGRRASRGYKN).

Belongs to the eukaryotic ribosomal protein eL18 family. Component of the large ribosomal subunit.

Its subcellular location is the cytoplasm. It localises to the cytosol. The protein resides in the rough endoplasmic reticulum. Functionally, component of the large ribosomal subunit. The ribosome is a large ribonucleoprotein complex responsible for the synthesis of proteins in the cell. In Xenopus laevis (African clawed frog), this protein is Large ribosomal subunit protein eL18B (rpl18-b).